We begin with the raw amino-acid sequence, 490 residues long: Subtilisin-like protease 8 (490 aa).

A signal peptide spans 1 to 26; it reads MKGLLSLSVLPVLAYASPMIVDSIHQ. Residues 27-134 constitute a propeptide that is removed on maturation; that stretch reads NAAPILSSTN…YIERDSEVHT (108 aa). Positions 43 to 134 constitute an Inhibitor I9 domain; sequence SYIVVFKKGV…YIERDSEVHT (92 aa). The Peptidase S8 domain occupies 144-450; the sequence is PWGLARISHR…GGSDDYKKII (307 aa). Active-site charge relay system residues include aspartate 180 and histidine 212. N-linked (GlcNAc...) asparagine glycosylation is present at asparagine 282. Serine 378 functions as the Charge relay system in the catalytic mechanism. An N-linked (GlcNAc...) asparagine glycan is attached at asparagine 456.

This sequence belongs to the peptidase S8 family.

It localises to the secreted. Functionally, secreted subtilisin-like serine protease with keratinolytic activity that contributes to pathogenicity. The protein is Subtilisin-like protease 8 (SUB8) of Trichophyton verrucosum (strain HKI 0517).